The primary structure comprises 116 residues: QLANEPPIEIIRQESTDNGDGNFNFLFETANGIYKEVSGYPTANGAQAMTGSFRFPLDDGQIVEVSFTADENGYLPVSDFIPTPHPIPAHVLETLAIVDELVRQGATWDEQGRRIT.

Position 1 is a pyrrolidone carboxylic acid (Gln1). The disordered stretch occupies residues 1–22 (QLANEPPIEIIRQESTDNGDGN). One can recognise a Chitin-binding type R&amp;R domain in the interval 20–85 (DGNFNFLFET…PVSDFIPTPH (66 aa)). A glycan (O-linked (HexNAc) threonine) is linked at Thr83.

As to expression, arthrodial membrane.

The protein is Cuticle protein AM1274 of Cancer pagurus (Rock crab).